The sequence spans 313 residues: Oxaloacetate tautomerase Fahd2a, mitochondrial (313 aa).

A mitochondrion-targeting transit peptide spans Met-1 to Leu-84. Residues Glu-159, Glu-161, and Asp-190 each coordinate Mg(2+). N6-acetyllysine; alternate is present on Lys-202. Lys-202 bears the N6-succinyllysine; alternate mark. At Lys-233 the chain carries N6-acetyllysine.

Belongs to the FAH family. The cofactor is Mg(2+). Mn(2+) serves as cofactor.

The protein resides in the mitochondrion. It catalyses the reaction oxaloacetate = enol-oxaloacetate. Tautomerase that converts enol-oxaloacetate, a strong inhibitor of succinate dehydrogenase, to the physiological keto form of oxaloacetate. It is thereby required to maximize aerobic respiration efficiency by preventing succinate dehydrogenase inhibition. The sequence is that of Oxaloacetate tautomerase Fahd2a, mitochondrial from Rattus norvegicus (Rat).